Reading from the N-terminus, the 221-residue chain is Probable hydrogenase maturation factor HypB (221 aa).

Positions 35-196 (AFDFMGAIGS…KRINPDAEVV (162 aa)) are G-domain. Ni(2+) contacts are provided by Cys95 and His96. Cys95, His96, His100, His104, and Cys127 together coordinate Zn(2+). Cys127 contacts Ni(2+).

The protein belongs to the SIMIBI class G3E GTPase family. HypB/HupM subfamily. As to quaternary structure, homodimer.

Its function is as follows. Involved in the maturation of [NiFe] hydrogenases. Required for nickel insertion into the metal center of the hydrogenase. Exhibits a low intrinsic GTPase activity, which is essential for nickel insertion. In Methanocaldococcus jannaschii (strain ATCC 43067 / DSM 2661 / JAL-1 / JCM 10045 / NBRC 100440) (Methanococcus jannaschii), this protein is Probable hydrogenase maturation factor HypB.